Reading from the N-terminus, the 468-residue chain is Probable protein phosphatase 2C 52 (468 aa).

The PPM-type phosphatase domain occupies 67 to 372; that stretch reads SSCIFTQQGR…DDCAVVCLFL (306 aa). Residues Asp-102, Gly-103, Asp-317, and Asp-363 each contribute to the Mn(2+) site. Residues 413-429 are compositionally biased toward polar residues; sequence RSSSDQENETYGNVNTE. The disordered stretch occupies residues 413–442; that stretch reads RSSSDQENETYGNVNTETDAEDEKTVGDQN.

Belongs to the PP2C family. The cofactor is Mg(2+). Mn(2+) serves as cofactor.

It catalyses the reaction O-phospho-L-seryl-[protein] + H2O = L-seryl-[protein] + phosphate. It carries out the reaction O-phospho-L-threonyl-[protein] + H2O = L-threonyl-[protein] + phosphate. This is Probable protein phosphatase 2C 52 from Arabidopsis thaliana (Mouse-ear cress).